The sequence spans 463 residues: NADH dehydrogenase [ubiquinone] iron-sulfur protein 2, mitochondrial (463 aa).

The transit peptide at 1–33 (MAALRVLCGLRGVAAQVLRPGAGVRLPIQPSRG) directs the protein to the mitochondrion. Residue Lys62 is modified to N6-acetyllysine. Position 118 is a symmetric dimethylarginine (Arg118). Residues Cys326, Cys332, and Cys347 each coordinate [4Fe-4S] cluster.

This sequence belongs to the complex I 49 kDa subunit family. Core subunit of respiratory chain NADH dehydrogenase (Complex I) which is composed of 45 different subunits. Component of the iron-sulfur (IP) fragment of the enzyme. Interacts with NDUFAF3. Interacts with NDUFAF7. Interacts with CERS2. The cofactor is [4Fe-4S] cluster. Post-translationally, dimethylation at Arg-118 by NDUFAF7 takes place after NDUFS2 assembles into the complex I, leading to stabilize the early intermediate complex.

Its subcellular location is the mitochondrion inner membrane. The catalysed reaction is a ubiquinone + NADH + 5 H(+)(in) = a ubiquinol + NAD(+) + 4 H(+)(out). Functionally, core subunit of the mitochondrial membrane respiratory chain NADH dehydrogenase (Complex I) which catalyzes electron transfer from NADH through the respiratory chain, using ubiquinone as an electron acceptor. Essential for the catalytic activity and assembly of complex I. Redox-sensitive, critical component of the oxygen-sensing pathway in the pulmonary vasculature which plays a key role in acute pulmonary oxygen-sensing and hypoxic pulmonary vasoconstriction. Plays an important role in carotid body sensing of hypoxia. Essential for glia-like neural stem and progenitor cell proliferation, differentiation and subsequent oligodendrocyte or neuronal maturation. This chain is NADH dehydrogenase [ubiquinone] iron-sulfur protein 2, mitochondrial (NDUFS2), found in Gorilla gorilla gorilla (Western lowland gorilla).